The following is a 328-amino-acid chain: uncharacterized protein (328 aa).

The segment at residues 72 to 91 is a DNA-binding region (H-T-H motif); sequence ALQIRDKFNLQRVIIVPDGE.

This sequence belongs to the SorC transcriptional regulatory family.

This is an uncharacterized protein from Escherichia coli (strain K12).